The chain runs to 633 residues: Probable extracellular metalloproteinase 3 (633 aa).

The first 18 residues, 1–18, serve as a signal peptide directing secretion; it reads MHGLLLAGLLALPMNVLA. A propeptide spanning residues 19–246 is cleaved from the precursor; that stretch reads HPAEQHASNV…VHNVVDYVAS (228 aa). N-linked (GlcNAc...) asparagine glycosylation occurs at Asn410. His429 lines the Zn(2+) pocket. Glu430 is a catalytic residue. Zn(2+) is bound at residue His433. 2 N-linked (GlcNAc...) asparagine glycosylation sites follow: Asn480 and Asn622.

The protein belongs to the peptidase M36 family. Zn(2+) serves as cofactor.

It localises to the secreted. Functionally, secreted metalloproteinase probably acting as a virulence factor. The protein is Probable extracellular metalloproteinase 3 (MEP3) of Trichophyton verrucosum (strain HKI 0517).